Reading from the N-terminus, the 188-residue chain is Probable manganese efflux pump MntP (188 aa).

Transmembrane regions (helical) follow at residues 3 to 23 (ITAT…ASVG), 66 to 86 (LEWN…RMII), 106 to 128 (WLLV…GLAF), 143 to 163 (ATLI…SIIG), and 168 to 188 (ILGG…HFHG).

The protein belongs to the MntP (TC 9.B.29) family.

The protein localises to the cell inner membrane. Functionally, probably functions as a manganese efflux pump. The protein is Probable manganese efflux pump MntP of Shigella sonnei (strain Ss046).